Here is a 232-residue protein sequence, read N- to C-terminus: Peptide deformylase (232 aa).

Fe cation is bound by residues Cys-135 and His-178. Glu-179 is a catalytic residue. His-182 serves as a coordination point for Fe cation.

It belongs to the polypeptide deformylase family. The cofactor is Fe(2+).

It catalyses the reaction N-terminal N-formyl-L-methionyl-[peptide] + H2O = N-terminal L-methionyl-[peptide] + formate. Functionally, removes the formyl group from the N-terminal Met of newly synthesized proteins. Requires at least a dipeptide for an efficient rate of reaction. N-terminal L-methionine is a prerequisite for activity but the enzyme has broad specificity at other positions. The sequence is that of Peptide deformylase from Deinococcus radiodurans (strain ATCC 13939 / DSM 20539 / JCM 16871 / CCUG 27074 / LMG 4051 / NBRC 15346 / NCIMB 9279 / VKM B-1422 / R1).